We begin with the raw amino-acid sequence, 625 residues long: MMNESLTEKRNELSLSFAALGVVFGDIGTSPLYAFGQVIKYFPINDHNIYGILSLIFWSLIIIVSIKYLVIVFRADNDGEGGIIALAGVIRQKIKQPGGWLLFITLVGIGLIIGDGMLTPAISILSAVEGLESLSPNLAKYVLPVTLIILFFLFKMQSIGTGKIGVYFAPVMLVWFITIGILGFLQIIQNPKVLMAINPYYAINFFMIHKYFALFILGGVFLVMTGGEALFADLGHFGKKAIRTGWFAVALPALLLCYFGQGAFVLMHTEDIKYPFFSLSPDWFLPVMIILATLATIIASQAIISAAFSILKQASLLNLIPRLKIVFTSKFEKGEVYLPLINFILALGTCSLVVIFKSSSNLADAYGIAVNLDMLITTVLVGIIAYRCWSWHAFKILIFLLILIIELAFFAGNIPKLLTGGWIPILIAFLGFVVMYTWHCGFEKLRELHHRDALMDAFIIDELNQNKISRQPGMGLYIIDPYDCEGESLLHHLRLNRIFFENMVFVSIKIENKPYIPIEDKFELIKKAEGFYLIFIHYGFTENINLPNELDEMFKRVYLPFDIIKNKLIYFIEIVFVEMTGERQKHMYLWQKHFFSLMIRNAVPDIQFYQLPYNNTIAIGTYYQF.

The next 12 membrane-spanning stretches (helical) occupy residues 15–35, 52–72, 98–118, 134–154, 164–184, 212–232, 246–266, 284–304, 336–356, 365–385, 394–414, and 417–437; these read LSFAALGVVFGDIGTSPLYAF, ILSLIFWSLIIIVSIKYLVIV, GGWLLFITLVGIGLIIGDGML, LSPNLAKYVLPVTLIILFFLF, IGVYFAPVMLVWFITIGILGF, FALFILGGVFLVMTGGEALFA, WFAVALPALLLCYFGQGAFVL, FLPVMIILATLATIIASQAII, VYLPLINFILALGTCSLVVIF, AYGIAVNLDMLITTVLVGIIA, FKILIFLLILIIELAFFAGNI, and LLTGGWIPILIAFLGFVVMYT.

Belongs to the HAK/KUP transporter (TC 2.A.72) family.

The protein resides in the cell inner membrane. The enzyme catalyses K(+)(in) + H(+)(in) = K(+)(out) + H(+)(out). Functionally, transport of potassium into the cell. Likely operates as a K(+):H(+) symporter. This chain is Probable potassium transport system protein Kup 2, found in Legionella pneumophila (strain Paris).